The following is a 273-amino-acid chain: Pyrroline-5-carboxylate reductase (273 aa).

The protein belongs to the pyrroline-5-carboxylate reductase family.

It localises to the cytoplasm. It catalyses the reaction L-proline + NADP(+) = (S)-1-pyrroline-5-carboxylate + NADPH + 2 H(+). It carries out the reaction L-proline + NAD(+) = (S)-1-pyrroline-5-carboxylate + NADH + 2 H(+). Its pathway is amino-acid biosynthesis; L-proline biosynthesis; L-proline from L-glutamate 5-semialdehyde: step 1/1. This is Pyrroline-5-carboxylate reductase (PROC) from Pisum sativum (Garden pea).